A 402-amino-acid chain; its full sequence is Argininosuccinate synthase (402 aa).

ATP contacts are provided by residues 9–17 and Ala-36; that span reads AYSGGLDTS. L-citrulline contacts are provided by Tyr-87 and Ser-92. Gly-117 serves as a coordination point for ATP. 3 residues coordinate L-aspartate: Thr-119, Asn-123, and Asp-124. Residue Asn-123 participates in L-citrulline binding. 5 residues coordinate L-citrulline: Arg-127, Ser-176, Ser-185, Glu-261, and Tyr-273.

This sequence belongs to the argininosuccinate synthase family. Type 1 subfamily. As to quaternary structure, homotetramer.

The protein localises to the cytoplasm. It carries out the reaction L-citrulline + L-aspartate + ATP = 2-(N(omega)-L-arginino)succinate + AMP + diphosphate + H(+). It participates in amino-acid biosynthesis; L-arginine biosynthesis; L-arginine from L-ornithine and carbamoyl phosphate: step 2/3. This Deinococcus radiodurans (strain ATCC 13939 / DSM 20539 / JCM 16871 / CCUG 27074 / LMG 4051 / NBRC 15346 / NCIMB 9279 / VKM B-1422 / R1) protein is Argininosuccinate synthase.